Reading from the N-terminus, the 200-residue chain is HTH-type transcriptional repressor KstR2 (200 aa).

An HTH tetR-type domain is found at 9 to 69 (NSRRGELLEL…ELLRGFLDWL (61 aa)). A DNA-binding region (H-T-H motif) is located at residues 32–51 (TVRDIADGAGILSGSLYHHF).

Homodimer.

Controls the expression of a small regulon that may play a role in the utilization of cholesterol. This chain is HTH-type transcriptional repressor KstR2 (kstR2), found in Mycobacterium tuberculosis (strain CDC 1551 / Oshkosh).